An 852-amino-acid chain; its full sequence is Genome polyprotein (852 aa).

2 consecutive short sequence motifs ((L)YPX(n)L motif) follow at residues 167 to 171 (YPHGL) and 200 to 205 (YPVWEL). Positions 766–836 (MMSRIAAGDL…PRKMKGLFSQ (71 aa)) are involved in P1-2A pentamerization.

It belongs to the picornaviridae polyprotein family. In terms of assembly, homodimer. Homomultimer; probably interacts with membranes in a multimeric form. Seems to assemble into amyloid-like fibers. As to quaternary structure, homopentamer. Homooligomer. Interacts with capsid protein VP2. Interacts with capsid protein VP3. In terms of assembly, interacts with capsid protein VP1. Interacts with capsid protein VP3. As to quaternary structure, interacts with capsid protein VP1. Interacts with capsid protein VP2. In terms of processing, specific enzymatic cleavages by viral protease in vivo yield a variety of precursors and mature proteins. Polyprotein processing intermediates are produced, such as P1-2A which is a functional precursor of the structural proteins, VP0 which is a VP4-VP2 precursor, VP1-2A precursor, 3ABC precursor which is a stable and catalytically active precursor of 3A, 3B and 3C proteins, 3AB and 3CD precursors. The assembly signal 2A is removed from VP1-2A by a host protease, possibly host Cathepsin L. This cleavage occurs over a region of 3 amino-acids probably generating VP1 proteins with heterogeneous C-termini. Post-translationally, during virion maturation, immature virions are rendered infectious following cleavage of VP0 into VP4 and VP2. This maturation seems to be an autocatalytic event triggered by the presence of RNA in the capsid and is followed by a conformational change of the particle. The assembly signal 2A is removed from VP1-2A by a host protease, possibly host Cathepsin L in naked virions. This cleavage does not occur in enveloped virions. This cleavage occurs over a region of 3 amino-acids probably generating VP1 proteins with heterogeneous C-termini. In terms of processing, viral protein genome-linked: VPg is uridylylated prior to priming replication into VPg-pUpU. Post-translationally, unlike other picornaviruses, does not seem to be myristoylated.

The protein resides in the virion. It is found in the host endosome. It localises to the host multivesicular body. The protein localises to the host membrane. Functionally, capsid proteins VP1, VP2, and VP3 form a closed capsid enclosing the viral positive strand RNA genome. All these proteins contain a beta-sheet structure called beta-barrel jelly roll. Together they form an icosahedral capsid (T=3) composed of 60 copies of each VP1, VP2, and VP3, with a diameter of approximately 300 Angstroms. VP1 is situated at the 12 fivefold axes, whereas VP2 and VP3 are located at the quasi-sixfold axes. The naked capsid interacts with the host receptor HAVCR1 to provide virion attachment to and probably entry into the target cell. VP0 precursor is a component of the immature procapsids. Its function is as follows. Plays a role in the assembly of the 12 pentamers into an icosahedral structure. Has not been detected in mature virions, supposedly owing to its small size. In terms of biological role, precursor component of immature procapsids that corresponds to an extended form of the structural protein VP1. After maturation, possibly by the host Cathepsin L, the assembly signal 2A is cleaved to give rise to the mature VP1 protein. Functionally, affects membrane integrity and causes an increase in membrane permeability. Functions as a viroporin. Affects membrane integrity and causes an increase in membrane permeability. Involved in host intracellular membrane rearrangements probably to give rise to the viral factories. Does not disrupt calcium homeostasis or glycoprotein trafficking. Antagonizes the innate immune response of the host by suppressing IFN-beta synthesis, which it achieves by interfering with the RIG-I/IFIH1 pathway. In Cercopithecus hamlyni (Owl-faced monkey), this protein is Genome polyprotein.